The sequence spans 160 residues: Cytochrome c-type biogenesis protein CcmE (160 aa).

Residues M1 to R8 are Cytoplasmic-facing. A helical; Signal-anchor for type II membrane protein membrane pass occupies residues L9–A29. Over L30–Q160 the chain is Periplasmic. Heme-binding residues include H128 and Y132.

Belongs to the CcmE/CycJ family.

The protein resides in the cell inner membrane. Its function is as follows. Heme chaperone required for the biogenesis of c-type cytochromes. Transiently binds heme delivered by CcmC and transfers the heme to apo-cytochromes in a process facilitated by CcmF and CcmH. This is Cytochrome c-type biogenesis protein CcmE from Vibrio cholerae serotype O1 (strain ATCC 39541 / Classical Ogawa 395 / O395).